The following is a 247-amino-acid chain: Small ribosomal subunit protein uS2 (247 aa).

It belongs to the universal ribosomal protein uS2 family.

This is Small ribosomal subunit protein uS2 from Halorhodospira halophila (strain DSM 244 / SL1) (Ectothiorhodospira halophila (strain DSM 244 / SL1)).